The primary structure comprises 179 residues: B-cell acute lymphoblastic leukemia-expressed protein (179 aa).

Disordered regions lie at residues 1-20 and 65-86; these read MMKD…TDLQ and RDTP…RGKA. Polar residues predominate over residues 10-20; that stretch reads SWASEESTDLQ.

In Homo sapiens (Human), this protein is B-cell acute lymphoblastic leukemia-expressed protein (BLACE).